The chain runs to 264 residues: NAD-capped RNA hydrolase NudC (264 aa).

R70 lines the substrate pocket. The Zn(2+) site is built by C99 and C102. Residue E112 coordinates substrate. C117 and C122 together coordinate Zn(2+). Residue Y127 participates in substrate binding. In terms of domain architecture, Nudix hydrolase spans 128–252 (PVICPCIIVA…TIALKLIEHT (125 aa)). A divalent metal cation is bound by residues A161, E177, and E181. The short motif at 162–183 (GFVEVGETFEQAVHREVLEETG) is the Nudix box element. Residue 195-202 (QPWAFPNS) participates in substrate binding. E222 contacts a divalent metal cation. A245 contacts substrate.

It belongs to the Nudix hydrolase family. NudC subfamily. As to quaternary structure, homodimer. It depends on Mg(2+) as a cofactor. The cofactor is Mn(2+). Requires Zn(2+) as cofactor.

The catalysed reaction is a 5'-end NAD(+)-phospho-ribonucleoside in mRNA + H2O = a 5'-end phospho-adenosine-phospho-ribonucleoside in mRNA + beta-nicotinamide D-ribonucleotide + 2 H(+). The enzyme catalyses NAD(+) + H2O = beta-nicotinamide D-ribonucleotide + AMP + 2 H(+). It carries out the reaction NADH + H2O = reduced beta-nicotinamide D-ribonucleotide + AMP + 2 H(+). Functionally, mRNA decapping enzyme that specifically removes the nicotinamide adenine dinucleotide (NAD) cap from a subset of mRNAs by hydrolyzing the diphosphate linkage to produce nicotinamide mononucleotide (NMN) and 5' monophosphate mRNA. The NAD-cap is present at the 5'-end of some mRNAs and stabilizes RNA against 5'-processing. Has preference for mRNAs with a 5'-end purine. Catalyzes the hydrolysis of a broad range of dinucleotide pyrophosphates. In Pasteurella multocida (strain Pm70), this protein is NAD-capped RNA hydrolase NudC.